Consider the following 1035-residue polypeptide: Electrogenic sodium bicarbonate cotransporter 1 (1035 aa).

Topologically, residues 1–421 (MSSEKECLEN…FASDFYDALS (421 aa)) are cytoplasmic. Polar residues predominate over residues 192 to 217 (SRLFSTPDNGSPTMTHRNLTSTSLND). Disordered regions lie at residues 192–222 (SRLF…SDKP) and 348–389 (IEPP…GDSE). The span at 376–389 (APHDDGGGGHGDSE) shows a compositional bias: basic and acidic residues. Residues 422 to 446 (IQSLSAILFIYLGTVTNAITFGGLL) form a helical membrane-spanning segment. The Extracellular segment spans residues 447-456 (GDATENMQGV). The chain crosses the membrane as a helical span at residues 457–475 (LESFLGTAVSGAVFCLFGG). A topological domain (cytoplasmic) is located at residue glutamine 476. The discontinuously helical transmembrane segment at 477–497 (PLTILSSTGPVLVFERLLFNF) threads the bilayer. Residues 498 to 505 (SKDNDFDY) lie on the Extracellular side of the membrane. Residues 506–526 (LEFRLWIGLWSAFQCLILVAT) traverse the membrane as a helical segment. Residues 527–540 (DASFLVKYFTRFTE) are Cytoplasmic-facing. The chain crosses the membrane as a helical span at residues 541 to 564 (EGFSSLISFIFIYDAFKKMIKLAD). At 565–648 (YYPINSHFKV…GSNCKYVPDI (84 aa)) the chain is on the extracellular side. Residues asparagine 591, asparagine 596, asparagine 609, and asparagine 617 are each glycosylated (N-linked (GlcNAc...) asparagine). A helical transmembrane segment spans residues 649-666 (TLMSFILFLGTYTCSMAL). Residues 667–681 (KKFKTSRYFPTTARK) are Cytoplasmic-facing. Residues 682-701 (LISDFAIILSILIFCGLDAL) form a helical membrane-spanning segment. Over 702–735 (LGVDTPKLIVPSEFKPTSPNRGWFVPPFGGNPWW) the chain is Extracellular. A helical membrane pass occupies residues 736–763 (VYLAAAIPALLVTILIFMDQQITGVIVN). Residues 764 to 775 (RKEHKLKKGAGY) lie on the Cytoplasmic side of the membrane. Residues 776 to 792 (HLDLFWVAILMVVCSFM) traverse the membrane as a helical segment. A topological domain (extracellular) is located at residue alanine 793. The chain crosses the membrane as a discontinuously helical span at residues 794 to 811 (LPWYVAATVISIAHIDSL). The Cytoplasmic segment spans residues 812-833 (KMETETSAPGEQPKFLGVREQR). The helical transmembrane segment at 834 to 850 (VTGTVVFLLTGLSVFMA) threads the bilayer. Topologically, residues 851-857 (PILKFIP) are extracellular. A helical transmembrane segment spans residues 858 to 874 (MPVLYGVFLYMGVASLN). Residues 875 to 916 (GVQFMDRLKLLLMPPKYQPDFIYLRHVPLRRVHLFTFLQVVC) are Cytoplasmic-facing. The discontinuously helical intramembrane region spans 917–942 (LAMLWILKSTVAAIIFPVMILALVAV). At 943-1035 (RKAMDYFFSQ…PTFLERHTSC (93 aa)) the chain is on the cytoplasmic side. A disordered region spans residues 968-1035 (KKKEDEKKKK…PTFLERHTSC (68 aa)). Residues 1007 to 1035 (IMEKEPFLIDSKPSDRENSPTFLERHTSC) show a composition bias toward basic and acidic residues.

This sequence belongs to the anion exchanger (TC 2.A.31) family. As to quaternary structure, homodimer. As to expression, expressed in kidney and to a lower extent in bladder, brain, intestine, large intestine and eye.

It is found in the basolateral cell membrane. Its subcellular location is the cell membrane. The enzyme catalyses 2 hydrogencarbonate(out) + Na(+)(out) = 2 hydrogencarbonate(in) + Na(+)(in). It catalyses the reaction 3 hydrogencarbonate(out) + Na(+)(out) = 3 hydrogencarbonate(in) + Na(+)(in). In terms of biological role, electrogenic sodium/bicarbonate cotransporter with a Na(+):HCO3(-) stoichiometry varying from 1:2 to 1:3. May regulate bicarbonate influx/efflux at the basolateral membrane of cells and regulate intracellular pH. In Ambystoma tigrinum (Eastern tiger salamander), this protein is Electrogenic sodium bicarbonate cotransporter 1 (SLC4A4).